The sequence spans 469 residues: 3-isopropylmalate dehydratase large subunit (469 aa).

[4Fe-4S] cluster-binding residues include Cys347, Cys407, and Cys410.

This sequence belongs to the aconitase/IPM isomerase family. LeuC type 1 subfamily. As to quaternary structure, heterodimer of LeuC and LeuD. The cofactor is [4Fe-4S] cluster.

The catalysed reaction is (2R,3S)-3-isopropylmalate = (2S)-2-isopropylmalate. The protein operates within amino-acid biosynthesis; L-leucine biosynthesis; L-leucine from 3-methyl-2-oxobutanoate: step 2/4. Functionally, catalyzes the isomerization between 2-isopropylmalate and 3-isopropylmalate, via the formation of 2-isopropylmaleate. This is 3-isopropylmalate dehydratase large subunit from Photorhabdus laumondii subsp. laumondii (strain DSM 15139 / CIP 105565 / TT01) (Photorhabdus luminescens subsp. laumondii).